We begin with the raw amino-acid sequence, 205 residues long: Thymidylate kinase (205 aa).

Glycine 11–threonine 18 contributes to the ATP binding site.

The protein belongs to the thymidylate kinase family.

It carries out the reaction dTMP + ATP = dTDP + ADP. Its function is as follows. Phosphorylation of dTMP to form dTDP in both de novo and salvage pathways of dTTP synthesis. This Clostridium novyi (strain NT) protein is Thymidylate kinase.